The chain runs to 106 residues: Toxin-like structure LSTX-D5 (106 aa).

The signal sequence occupies residues M1 to S20. Positions E21–R41 are excised as a propeptide. 4 disulfides stabilise this stretch: C45–C60, C52–C69, C59–C85, and C71–C83.

Belongs to the neurotoxin 19 (CSTX) family. 02 (D7) subfamily. In terms of tissue distribution, expressed by the venom gland.

It is found in the secreted. In Lycosa singoriensis (Wolf spider), this protein is Toxin-like structure LSTX-D5.